Here is a 536-residue protein sequence, read N- to C-terminus: MHLNIALWACGALLAVLLAWQQRKCWRLIWQLNGWRGVIQQPVLWLLLCINLHPNSILEKVSQYRVHFQRPLAVLVGTRVLLYIDDPAGMECVLNAPECLDKTFLQDGFFVRRGLLHARGQKWKLRRKQLNPAFSHNIVASFFDVFNSVGNQMVEQFQTQTNLHGQAVKFTAAEDLLSRAVLEVSCLTIMGTPTNFTQLDDAHIAHSYKRLLEISAVRVVKPWLQIRLLHRLLAPELYEESKKCAKLLEDFVGGIVRTKHRNWRLRDAVGGEKSGEDASNGWQRRIFIEQIFQLAANGEMTLEEIMDEAQSMVLVSFETVSNSIMLALLCLATNKGDCQRRLLAEIRALVPDVGQVGLEQLQQLRYLDAFVSESLRLLATVPMNLRHVSRDFRLAGRQHETIVPQNSIVVLDTFNMQRDERWWGANARQFDPQRFLDQEEEQLSKGHNDSGSGEKRRQRDRRHSYSFLPFSNGLRSCIGRRYGLFIMKVFLVKLITNFDFQSDFELEKLQFVENISLKFKNADDILLTIQPKKEST.

Residues 439–457 (EEEQLSKGHNDSGSGEKRR) are compositionally biased toward basic and acidic residues. A disordered region spans residues 439–460 (EEEQLSKGHNDSGSGEKRRQRD). Cys477 is a heme binding site.

It belongs to the cytochrome P450 family. The cofactor is heme.

It localises to the endoplasmic reticulum membrane. The protein localises to the microsome membrane. Its function is as follows. May be involved in the metabolism of insect hormones and in the breakdown of synthetic insecticides. The protein is Probable cytochrome P450 318a1 (Cyp318a1) of Drosophila melanogaster (Fruit fly).